A 478-amino-acid chain; its full sequence is SPbeta prophage-derived uncharacterized protein YonD (478 aa).

The stretch at 326-419 forms a coiled coil; that stretch reads IQSQLNQKDE…KFSTEEVQNL (94 aa).

The protein is SPbeta prophage-derived uncharacterized protein YonD (yonD) of Bacillus subtilis (strain 168).